Here is a 231-residue protein sequence, read N- to C-terminus: Ion-translocating oxidoreductase complex subunit E (231 aa).

6 consecutive transmembrane segments (helical) span residues Ala18–Ala38, Leu39–Leu59, Thr63–Val83, Leu86–Val106, Ala125–Leu145, and Pro182–Gly202.

The protein belongs to the NqrDE/RnfAE family. The complex is composed of six subunits: RsxA, RsxB, RsxC, RsxD, RsxE and RsxG.

It is found in the cell inner membrane. In terms of biological role, part of a membrane-bound complex that couples electron transfer with translocation of ions across the membrane. Required to maintain the reduced state of SoxR. The protein is Ion-translocating oxidoreductase complex subunit E of Escherichia coli (strain ATCC 8739 / DSM 1576 / NBRC 3972 / NCIMB 8545 / WDCM 00012 / Crooks).